The primary structure comprises 328 residues: Aryl-hydrocarbon-interacting protein-like 1 (328 aa).

The region spanning 53–145 (KQVGQPMNII…DLDELQKEPQ (93 aa)) is the PPIase FKBP-type domain. TPR repeat units follow at residues 178 to 211 (VPLL…LRNL), 230 to 263 (NTLI…HPGI), and 264 to 297 (VKAY…EPSM).

In terms of assembly, interacts with NUB1. As to expression, highly expressed in retina.

It is found in the cytoplasm. Its subcellular location is the nucleus. Its function is as follows. May be important in protein trafficking and/or protein folding and stabilization. In Rattus norvegicus (Rat), this protein is Aryl-hydrocarbon-interacting protein-like 1 (Aipl1).